The sequence spans 101 residues: Urinary protein 2 (101 aa).

The N-terminal stretch at 1-21 (MGKHILLLPLGLSLLMSSLLA) is a signal peptide. The 78-residue stretch at 22–99 (LQCFRCTSFD…CSATPFCNMV (78 aa)) folds into the UPAR/Ly6 domain. Cystine bridges form between Cys-24–Cys-51, Cys-27–Cys-36, Cys-43–Cys-70, Cys-73–Cys-89, and Cys-90–Cys-96. 2 N-linked (GlcNAc...) asparagine glycosylation sites follow: Asn-67 and Asn-74.

Post-translationally, N-glycosylated.

The protein resides in the secreted. This is Urinary protein 2 from Rattus norvegicus (Rat).